Reading from the N-terminus, the 277-residue chain is Elongation factor 1-delta (277 aa).

At A2 the chain carries N-acetylalanine. Residue K17 is modified to N6-acetyllysine. A phosphoserine mark is found at S37, S44, S60, S86, and S106. K107 carries the N6-acetyllysine modification. Positions 113–171 are disordered; sequence SALEKSSPAHRATTPQTQHVSPMRQVEPPSRKAATATEDDEDDDIDLFGSDEEEDKEAA. K117 is subject to N6-acetyllysine; alternate. K117 bears the N6-succinyllysine; alternate mark. At S119 the chain carries Phosphoserine. T129 is modified (phosphothreonine). A Phosphoserine modification is found at S133. Phosphothreonine is present on T147. Residues 149–168 show a composition bias toward acidic residues; it reads TEDDEDDDIDLFGSDEEEDK. The residue at position 162 (S162) is a Phosphoserine; by CK2.

The protein belongs to the EF-1-beta/EF-1-delta family. EF-1 is composed of 4 subunits: alpha, beta, delta, and gamma.

In terms of biological role, EF-1-beta and EF-1-delta stimulate the exchange of GDP bound to EF-1-alpha to GTP. The sequence is that of Elongation factor 1-delta (EEF1D) from Ovis aries (Sheep).